A 293-amino-acid polypeptide reads, in one-letter code: Ribonuclease HIII (293 aa).

Positions 78 to 293 (LPLIGTDEVG…TEKAKKRLER (216 aa)) constitute an RNase H type-2 domain. The a divalent metal cation site is built by Asp-84, Glu-85, and Asp-187.

This sequence belongs to the RNase HII family. RnhC subfamily. The cofactor is Mn(2+). Mg(2+) is required as a cofactor.

The protein localises to the cytoplasm. The enzyme catalyses Endonucleolytic cleavage to 5'-phosphomonoester.. In terms of biological role, endonuclease that specifically degrades the RNA of RNA-DNA hybrids. The chain is Ribonuclease HIII from Streptococcus pneumoniae serotype 19F (strain G54).